The chain runs to 82 residues: Cell division topological specificity factor (82 aa).

This sequence belongs to the MinE family.

Its function is as follows. Prevents the cell division inhibition by proteins MinC and MinD at internal division sites while permitting inhibition at polar sites. This ensures cell division at the proper site by restricting the formation of a division septum at the midpoint of the long axis of the cell. In Buchnera aphidicola subsp. Cinara cedri (strain Cc), this protein is Cell division topological specificity factor.